The following is a 278-amino-acid chain: Putative cysteine-rich repeat secretory protein 19 (278 aa).

Positions 1-32 (MYSSSSVSKRFVLVPIVVVVTTQLLLVRNVSS) are cleaved as a signal peptide. Gnk2-homologous domains lie at 39-147 (YLHH…SLDT) and 160-267 (PSAK…LYPF).

This sequence belongs to the cysteine-rich repeat secretory protein family.

The protein resides in the secreted. The protein is Putative cysteine-rich repeat secretory protein 19 (CRRSP19) of Arabidopsis thaliana (Mouse-ear cress).